The following is a 541-amino-acid chain: Protein yellow (541 aa).

A signal peptide spans 1–21; that stretch reads MFQDKGWVLLTLITLVSPSWA. An N-linked (GlcNAc...) asparagine glycan is attached at asparagine 144.

This sequence belongs to the major royal jelly protein family.

It is found in the secreted. In terms of biological role, controls the pigmentation pattern of the adult cuticle and larval mouth parts. The sequence is that of Protein yellow (y) from Drosophila yakuba (Fruit fly).